An 845-amino-acid chain; its full sequence is Lon protease (845 aa).

The Lon N-terminal domain maps to Met45–Leu242. Gly393 to Thr400 is a binding site for ATP. The 183-residue stretch at Asn629 to Glu811 folds into the Lon proteolytic domain. Active-site residues include Ser717 and Lys760.

Belongs to the peptidase S16 family. In terms of assembly, homohexamer. Organized in a ring with a central cavity.

Its subcellular location is the cytoplasm. The catalysed reaction is Hydrolysis of proteins in presence of ATP.. Its function is as follows. ATP-dependent serine protease that mediates the selective degradation of mutant and abnormal proteins as well as certain short-lived regulatory proteins. Required for cellular homeostasis and for survival from DNA damage and developmental changes induced by stress. Degrades polypeptides processively to yield small peptide fragments that are 5 to 10 amino acids long. Binds to DNA in a double-stranded, site-specific manner. This chain is Lon protease, found in Porphyromonas gingivalis (strain ATCC 33277 / DSM 20709 / CIP 103683 / JCM 12257 / NCTC 11834 / 2561).